A 659-amino-acid polypeptide reads, in one-letter code: ATP-binding cassette sub-family D member 3 (659 aa).

The interval 1–61 (MAAFSKYLTA…GKKERAVVDK (61 aa)) is interaction with PEX19. The N-linked (GlcNAc...) asparagine glycan is linked to asparagine 12. Lysine 61 is modified (N6-acetyllysine). The helical transmembrane segment at 84 to 104 (GYLLLIAVMLVSRTYCDVWMI) threads the bilayer. An ABC transmembrane type-1 domain is found at 85 to 372 (YLLLIAVMLV…MLLRMSQALG (288 aa)). Asparagine 106 is a glycosylation site (N-linked (GlcNAc...) asparagine). Residues 126 to 146 (LFNFIAAMPLISLVNNFLKYG) form a helical membrane-spanning segment. Asparagine 206 carries N-linked (GlcNAc...) asparagine glycosylation. Residues 224–244 (AIGAQGPASMMAYLLVSGLFL) traverse the membrane as a helical segment. Lysine 260 bears the N6-acetyllysine mark. Residues 313–333 (MGFIDSIIAKYVATVVGYLVV) form a helical membrane-spanning segment. Lysine 399 is modified (N6-acetyllysine). At serine 424 the chain carries Phosphoserine. The ABC transporter domain maps to 434–659 (INTDNIIKFD…ITEDTVEFGS (226 aa)). Residue 473–480 (GPNGCGKS) coordinates ATP. N6-acetyllysine is present on lysine 533. At serine 659 the chain carries Phosphoserine.

This sequence belongs to the ABC transporter superfamily. ABCD family. Peroxisomal fatty acyl CoA transporter (TC 3.A.1.203) subfamily. Homodimers. Can form heterodimers with ABCD1 and ABCD2. Dimerization is necessary to form an active transporter. Interacts with PEX19; mediates the targeting of ABCD3 to peroxisomes. Ubiquitinated by PEX2 during pexophagy in response to starvation, leading to its degradation.

It localises to the peroxisome membrane. The enzyme catalyses a very long-chain fatty acyl-CoA + H2O = a very long-chain fatty acid + CoA + H(+). It catalyses the reaction a very long-chain fatty acid(in) + ATP + H2O = a very long-chain fatty acid(out) + ADP + phosphate + H(+). The catalysed reaction is a long-chain fatty acyl-CoA + H2O = a long-chain fatty acid + CoA + H(+). It carries out the reaction a long-chain fatty acid(in) + ATP + H2O = a long-chain fatty acid(out) + ADP + phosphate + H(+). The enzyme catalyses pristanoyl-CoA + H2O = 2,6,10,14-tetramethylpentadecanoate + CoA + H(+). It catalyses the reaction 2,6,10,14-tetramethylpentadecanoate(in) + ATP + H2O = 2,6,10,14-tetramethylpentadecanoate(out) + ADP + phosphate + H(+). The catalysed reaction is hexadecanedioyl-CoA + H2O = hexadecanedioate + CoA + H(+). It carries out the reaction hexadecanedioate(in) + ATP + H2O = hexadecanedioate(out) + ADP + phosphate + H(+). The enzyme catalyses (5Z,8Z,11Z,14Z,17Z)-eicosapentaenoyl-CoA + H2O = (5Z,8Z,11Z,14Z,17Z)-eicosapentaenoate + CoA + H(+). It catalyses the reaction (5Z,8Z,11Z,14Z,17Z)-eicosapentaenoate(in) + ATP + H2O = (5Z,8Z,11Z,14Z,17Z)-eicosapentaenoate(out) + ADP + phosphate + H(+). The catalysed reaction is (4Z,7Z,10Z,13Z,16Z,19Z)-docosahexaenoyl-CoA + H2O = (4Z,7Z,10Z,13Z,16Z,19Z)-docosahexaenoate + CoA + H(+). It carries out the reaction (4Z,7Z,10Z,13Z,16Z,19Z)-docosahexaenoate(in) + ATP + H2O = (4Z,7Z,10Z,13Z,16Z,19Z)-docosahexaenoate(out) + ADP + phosphate + H(+). Its function is as follows. Broad substrate specificity ATP-dependent transporter of the ATP-binding cassette (ABC) family that catalyzes the transport of long-chain fatty acids (LCFA)-CoA, dicarboxylic acids-CoA, long-branched-chain fatty acids-CoA and bile acids from the cytosol to the peroxisome lumen for beta-oxydation. Has fatty acyl-CoA thioesterase and ATPase activities. Probably hydrolyzes fatty acyl-CoAs into free fatty acids prior to their ATP-dependent transport into peroxisomes. Thus, play a role in regulation of LCFAs and energy metabolism namely, in the degradation and biosynthesis of fatty acids by beta-oxidation. The protein is ATP-binding cassette sub-family D member 3 (Abcd3) of Mus musculus (Mouse).